We begin with the raw amino-acid sequence, 201 residues long: MKTASAGPEIERLISLLAKLPGLGPRSARRAALNLLGKKDALMRPLAEALADAADKIRACSECGNMDVSDPCTVCAAPNRLDAAICVVETVGDLWALERAGAFKGRYHVLGGVLSALDGVRPEDLNITKLVERSAREEVSEIVLALNATVDGQTTAHYLADRMAGCNVSITSLARGVPVGGELDYLDDGTLAAAFRSRSTV.

The C4-type zinc-finger motif lies at 60–75 (CSECGNMDVSDPCTVC). Residues 83 to 178 (AAICVVETVG…SITSLARGVP (96 aa)) enclose the Toprim domain.

It belongs to the RecR family.

May play a role in DNA repair. It seems to be involved in an RecBC-independent recombinational process of DNA repair. It may act with RecF and RecO. This is Recombination protein RecR from Maricaulis maris (strain MCS10) (Caulobacter maris).